The sequence spans 188 residues: Pyridoxal 5'-phosphate synthase subunit PdxT (188 aa).

Residue 47-49 coordinates L-glutamine; that stretch reads GES. C79 (nucleophile) is an active-site residue. L-glutamine-binding positions include R105 and 134–135; that span reads IR. Catalysis depends on charge relay system residues H170 and E172.

It belongs to the glutaminase PdxT/SNO family. In terms of assembly, in the presence of PdxS, forms a dodecamer of heterodimers. Only shows activity in the heterodimer.

It catalyses the reaction aldehydo-D-ribose 5-phosphate + D-glyceraldehyde 3-phosphate + L-glutamine = pyridoxal 5'-phosphate + L-glutamate + phosphate + 3 H2O + H(+). The enzyme catalyses L-glutamine + H2O = L-glutamate + NH4(+). Its pathway is cofactor biosynthesis; pyridoxal 5'-phosphate biosynthesis. Catalyzes the hydrolysis of glutamine to glutamate and ammonia as part of the biosynthesis of pyridoxal 5'-phosphate. The resulting ammonia molecule is channeled to the active site of PdxS. The polypeptide is Pyridoxal 5'-phosphate synthase subunit PdxT (Listeria monocytogenes serotype 4b (strain F2365)).